Consider the following 1246-residue polypeptide: Myosin-1 (1246 aa).

The segment at 1–41 (MGHSRRPVGGEKKSRGFGRSKAVADVGDGRQTGGKPQVKKA) is disordered. Residues 51 to 730 (IGVSDLTLLS…TLFALEAMRD (680 aa)) enclose the Myosin motor domain. 144–151 (GESGAGKT) provides a ligand contact to ATP. Position 372 is a phosphoserine (Ser372). The interval 419–501 (SIGILDIYGF…PGVFAALNDA (83 aa)) is actin-binding. 2 consecutive IQ domains span residues 734–754 (HNMA…RIEC) and 755–780 (AIRI…QGHK). In terms of domain architecture, TH1 spans 788-976 (RRRMSLLGSR…TIHTSAGEPP (189 aa)). A compositionally biased stretch (polar residues) spans 956–970 (GSSNVDTYKSSTIHT). 2 disordered regions span residues 956–1080 (GSSN…PKKP) and 1127–1246 (WTPQ…DDEW). 2 stretches are compositionally biased toward pro residues: residues 1033–1045 (APQP…PVPQ) and 1065–1078 (APPP…PAPK). Positions 1077–1138 (PKKPMAKVLY…PQAYLEEQKA (62 aa)) constitute an SH3 domain. Low complexity-rich tracts occupy residues 1151–1166 (TPAT…AKAK) and 1214–1228 (NSAS…LAEA). A compositionally biased stretch (basic and acidic residues) spans 1229–1240 (LRQRQEAMHGKQ).

The protein belongs to the TRAFAC class myosin-kinesin ATPase superfamily. Myosin family. Post-translationally, phosphorylation of the TEDS site (Ser-372) is required for the polarization of the actin cytoskeleton. Phosphorylation probably activates the myosin-I ATPase activity.

It localises to the cytoplasm. Its subcellular location is the cytoskeleton. The protein resides in the actin patch. Type-I myosin implicated in the organization of the actin cytoskeleton. Required for proper actin cytoskeleton polarization. At the cell cortex, assembles in patch-like structures together with proteins from the actin-polymerizing machinery and promotes actin assembly. Functions as actin nucleation-promoting factor (NPF) for the Arp2/3 complex. Plays an important role in polarized growth, spore germination, hyphal morphogenesis, and septal wall formation. The sequence is that of Myosin-1 (myoA) from Aspergillus terreus (strain NIH 2624 / FGSC A1156).